A 360-amino-acid polypeptide reads, in one-letter code: MADAKAQKRQKFDNVFPKLREELLAYLNQEGMPQDAVSWFQRNLDYNVPGGKLNRGISVVDSVEILKGRKLNDDEYFKAALLGWCVEFLQAFFLVSDDMMDQSVTRRGQPCWFRVEGINLIAINDSFMLEGAIYYLLKKHFRSEPYYVHLLELFHDTTFQTEIGQLIDLITAPEDHVDLSKFSLAKHQKIVIYKTAYYSFYLPVALAMYTCGVPHAPANDPYALAQSILIPLGEYFQVQDDFLDFAAPPEVLGKVGTDIVDNKCSWCVNAALARASPAQRRVLDDNYGLKDKEAEARVKALYEELGIRDEFAAYEERAYARIVGLIETIPAEGADVGAGDVRLKREVFKAFLDKIYKRQK.

Isopentenyl diphosphate contacts are provided by Lys52, Arg55, and Gln90. Mg(2+) is bound by residues Asp97 and Asp101. Dimethylallyl diphosphate is bound at residue Arg106. Arg107 is a binding site for isopentenyl diphosphate. 5 residues coordinate dimethylallyl diphosphate: Lys194, Thr195, Gln237, Lys254, and Lys263.

Belongs to the FPP/GGPP synthase family. It depends on Mg(2+) as a cofactor.

The enzyme catalyses isopentenyl diphosphate + dimethylallyl diphosphate = (2E)-geranyl diphosphate + diphosphate. It catalyses the reaction isopentenyl diphosphate + (2E)-geranyl diphosphate = (2E,6E)-farnesyl diphosphate + diphosphate. It functions in the pathway isoprenoid biosynthesis; farnesyl diphosphate biosynthesis; farnesyl diphosphate from geranyl diphosphate and isopentenyl diphosphate: step 1/1. Its pathway is isoprenoid biosynthesis; geranyl diphosphate biosynthesis; geranyl diphosphate from dimethylallyl diphosphate and isopentenyl diphosphate: step 1/1. In terms of biological role, farnesyl pyrophosphate synthase; part of the second module of ergosterol biosynthesis pathway that includes the middle steps of the pathway. The second module involves the formation of farnesyl diphosphate, which is also an important intermediate in the biosynthesis of ubiquinone, dolichol, heme and prenylated proteins. This module also plays a key role in the biosynthesis of triterpenes such as ganoderic acids (GA), a group of highly oxygenated lanostane-type triterpenoids which are well recognized as a main group of unique bioactive compounds in the medicinal mushroom Ganoderma lucidum. Activity by the mevalonate kinase first converts mevalonate into 5-phosphomevalonate. 5-phosphomevalonate is then further converted to 5-diphosphomevalonate by the phosphomevalonate kinase. The diphosphomevalonate decarboxylase MVD then produces isopentenyl diphosphate. The isopentenyl-diphosphate delta-isomerase then catalyzes the 1,3-allylic rearrangement of the homoallylic substrate isopentenyl (IPP) to its highly electrophilic allylic isomer, dimethylallyl diphosphate (DMAPP). Finally the farnesyl diphosphate synthase FPS catalyzes the sequential condensation of isopentenyl pyrophosphate with dimethylallyl pyrophosphate, and then with the resultant geranylpyrophosphate to the ultimate product farnesyl pyrophosphate. The sequence is that of Farnesyl pyrophosphate synthase from Ganoderma lucidum (Ling zhi medicinal fungus).